The primary structure comprises 64 residues: Prokaryotic ubiquitin-like protein UBact (64 aa).

Composition is skewed to basic and acidic residues over residues 1 to 12 (MSDLFRMEERRQ) and 33 to 64 (PDVKRPDTSDLLRRMKRVDPDAARRYRQRSGE). The disordered stretch occupies residues 1–64 (MSDLFRMEER…ARRYRQRSGE (64 aa)). An Isoglutamyl lysine isopeptide (Glu-Lys) (interchain with K-? in acceptor proteins) cross-link involves residue E64.

Belongs to the ubiquitin-like protein UBact family.

Functionally, may function as a protein modifier covalently attached to lysine residues of substrate proteins. This may serve to target the modified proteins for degradation by proteasomes. This chain is Prokaryotic ubiquitin-like protein UBact, found in Chthonomonas calidirosea (strain DSM 23976 / ICMP 18418 / T49).